Reading from the N-terminus, the 1127-residue chain is uncharacterized protein (1127 aa).

The N-terminal stretch at 1–26 (MRIHQRSAPCVPVLLFLFLPSAPLCA) is a signal peptide. Residues 533 to 600 (ETESLSPPAD…ASSSPSEMAV (68 aa)) form a disordered region. 2 stretches are compositionally biased toward low complexity: residues 536 to 549 (SLSP…TPSP) and 583 to 599 (AGAS…SEMA). Residues 1076–1126 (SEDEKEYQRALQELQKGNKLVASAVVEQLLQKDRNKKSAKIQQLKKRIDAQ) adopt a coiled-coil conformation.

This is an uncharacterized protein from Treponema pallidum (strain Nichols).